Consider the following 93-residue polypeptide: Small ribosomal subunit protein uS19 (93 aa).

This sequence belongs to the universal ribosomal protein uS19 family.

Functionally, protein S19 forms a complex with S13 that binds strongly to the 16S ribosomal RNA. This chain is Small ribosomal subunit protein uS19, found in Kocuria rhizophila (strain ATCC 9341 / DSM 348 / NBRC 103217 / DC2201).